A 467-amino-acid chain; its full sequence is Asparagine--tRNA ligase (467 aa).

It belongs to the class-II aminoacyl-tRNA synthetase family. Homodimer.

It is found in the cytoplasm. It catalyses the reaction tRNA(Asn) + L-asparagine + ATP = L-asparaginyl-tRNA(Asn) + AMP + diphosphate + H(+). This chain is Asparagine--tRNA ligase, found in Haemophilus influenzae (strain PittEE).